Consider the following 494-residue polypeptide: Alpha-amylase B (494 aa).

The N-terminal stretch at 1 to 18 is a signal peptide; it reads MFLAKSIVCLALLAVANA. At Gln19 the chain carries Pyrrolidone carboxylic acid. Cys46 and Cys102 are oxidised to a cystine. The Ca(2+) site is built by Asn116, Arg165, and Asp174. Cys153 and Cys167 form a disulfide bridge. Arg202 lines the chloride pocket. Catalysis depends on Asp204, which acts as the Nucleophile. His208 serves as a coordination point for Ca(2+). The active-site Proton donor is the Glu241. 2 residues coordinate chloride: Asn304 and Arg343. 2 disulfides stabilise this stretch: Cys376–Cys382 and Cys448–Cys460.

It belongs to the glycosyl hydrolase 13 family. Monomer. It depends on Ca(2+) as a cofactor. Requires chloride as cofactor.

It catalyses the reaction Endohydrolysis of (1-&gt;4)-alpha-D-glucosidic linkages in polysaccharides containing three or more (1-&gt;4)-alpha-linked D-glucose units.. This is Alpha-amylase B (Amy-d) from Drosophila yakuba (Fruit fly).